The following is a 261-amino-acid chain: 3-methyl-2-oxobutanoate hydroxymethyltransferase (261 aa).

Residues aspartate 42 and aspartate 81 each coordinate Mg(2+). 3-methyl-2-oxobutanoate contacts are provided by residues 42-43, aspartate 81, and lysine 110; that span reads DS. Glutamate 112 is a binding site for Mg(2+). Glutamate 179 (proton acceptor) is an active-site residue.

This sequence belongs to the PanB family. In terms of assembly, homodecamer; pentamer of dimers. Mg(2+) is required as a cofactor.

It localises to the cytoplasm. The enzyme catalyses 3-methyl-2-oxobutanoate + (6R)-5,10-methylene-5,6,7,8-tetrahydrofolate + H2O = 2-dehydropantoate + (6S)-5,6,7,8-tetrahydrofolate. Its pathway is cofactor biosynthesis; coenzyme A biosynthesis. In terms of biological role, catalyzes the reversible reaction in which hydroxymethyl group from 5,10-methylenetetrahydrofolate is transferred onto alpha-ketoisovalerate to form ketopantoate. The polypeptide is 3-methyl-2-oxobutanoate hydroxymethyltransferase (Pyrobaculum islandicum (strain DSM 4184 / JCM 9189 / GEO3)).